Here is a 133-residue protein sequence, read N- to C-terminus: FLLGAANIPPHPLNLINFMEMIRYTIPCEKTWGEYADYGCYCGAGGSGRPIDALDRCCYVHDNCYGDAANIRDCNPKTQSYSYKLTKRTIICYGAAGTCARIVCDCDRTAALCFGNSEYIERHKNIDTKRHCR.

The first 5 residues, 1–5 (FLLGA), serve as a signal peptide directing secretion. Positions 6–13 (ANIPPHPL) are excised as a propeptide. 6 disulfides stabilise this stretch: Cys40–Cys132, Cys42–Cys58, Cys57–Cys113, Cys64–Cys106, Cys74–Cys99, and Cys92–Cys104. The Ca(2+) site is built by Tyr41, Gly43, and Gly45. The active site involves His61. Residue Asp62 coordinates Ca(2+). Residue Asp107 is part of the active site.

It belongs to the phospholipase A2 family. Group I subfamily. D49 sub-subfamily. In terms of assembly, heterodimer; disulfide-linked. The A chains have phospholipase A2 activity and the B chains show homology with the basic protease inhibitors. Ca(2+) is required as a cofactor. As to expression, expressed by the venom gland.

The protein resides in the secreted. It catalyses the reaction a 1,2-diacyl-sn-glycero-3-phosphocholine + H2O = a 1-acyl-sn-glycero-3-phosphocholine + a fatty acid + H(+). Snake venom phospholipase A2 (PLA2) that inhibits neuromuscular transmission by blocking acetylcholine release from the nerve termini. PLA2 catalyzes the calcium-dependent hydrolysis of the 2-acyl groups in 3-sn-phosphoglycerides. The sequence is that of Basic phospholipase A2 beta-bungarotoxin A-AL2 chain from Bungarus multicinctus (Many-banded krait).